We begin with the raw amino-acid sequence, 296 residues long: Acetylglutamate kinase (296 aa).

Substrate is bound by residues 69-70 (GG), Arg-91, and Asn-193.

The protein belongs to the acetylglutamate kinase family. ArgB subfamily.

The protein localises to the cytoplasm. The enzyme catalyses N-acetyl-L-glutamate + ATP = N-acetyl-L-glutamyl 5-phosphate + ADP. It participates in amino-acid biosynthesis; L-arginine biosynthesis; N(2)-acetyl-L-ornithine from L-glutamate: step 2/4. Catalyzes the ATP-dependent phosphorylation of N-acetyl-L-glutamate. The polypeptide is Acetylglutamate kinase (Delftia acidovorans (strain DSM 14801 / SPH-1)).